A 201-amino-acid polypeptide reads, in one-letter code: Probable chemoreceptor glutamine deamidase CheD (201 aa).

It belongs to the CheD family.

It catalyses the reaction L-glutaminyl-[protein] + H2O = L-glutamyl-[protein] + NH4(+). In terms of biological role, probably deamidates glutamine residues to glutamate on methyl-accepting chemotaxis receptors (MCPs), playing an important role in chemotaxis. This is Probable chemoreceptor glutamine deamidase CheD from Chlorobium luteolum (strain DSM 273 / BCRC 81028 / 2530) (Pelodictyon luteolum).